A 435-amino-acid chain; its full sequence is Ribosomal protein uS12 methylthiotransferase RimO (435 aa).

The MTTase N-terminal domain occupies 3–113; it reads HKVGFVSLGC…VVNAVHQYLP (111 aa). 6 residues coordinate [4Fe-4S] cluster: Cys-12, Cys-48, Cys-77, Cys-144, Cys-148, and Cys-151. In terms of domain architecture, Radical SAM core spans 130 to 367; the sequence is LTPRHYAYLK…MQVQAEISRN (238 aa). Positions 370–435 constitute a TRAM domain; sequence KNKIGSTQTV…DDYDLYASLV (66 aa).

Belongs to the methylthiotransferase family. RimO subfamily. [4Fe-4S] cluster serves as cofactor.

The protein localises to the cytoplasm. It carries out the reaction L-aspartate(89)-[ribosomal protein uS12]-hydrogen + (sulfur carrier)-SH + AH2 + 2 S-adenosyl-L-methionine = 3-methylsulfanyl-L-aspartate(89)-[ribosomal protein uS12]-hydrogen + (sulfur carrier)-H + 5'-deoxyadenosine + L-methionine + A + S-adenosyl-L-homocysteine + 2 H(+). In terms of biological role, catalyzes the methylthiolation of an aspartic acid residue of ribosomal protein uS12. The polypeptide is Ribosomal protein uS12 methylthiotransferase RimO (Legionella pneumophila subsp. pneumophila (strain Philadelphia 1 / ATCC 33152 / DSM 7513)).